Here is a 251-residue protein sequence, read N- to C-terminus: DNA repair protein RecO (251 aa).

The protein belongs to the RecO family.

In terms of biological role, involved in DNA repair and RecF pathway recombination. This chain is DNA repair protein RecO, found in Macrococcus caseolyticus (strain JCSC5402) (Macrococcoides caseolyticum).